A 239-amino-acid chain; its full sequence is Ribosomal RNA small subunit methyltransferase G (239 aa).

Residues Gly-77, Phe-82, 128–129, and Arg-147 contribute to the S-adenosyl-L-methionine site; that span reads AE. The disordered stretch occupies residues 215-239; it reads IRKTKSTPKKYPRKPGTPNKSPIEG. The segment covering 216–227 has biased composition (basic residues); sequence RKTKSTPKKYPR.

It belongs to the methyltransferase superfamily. RNA methyltransferase RsmG family.

It localises to the cytoplasm. In terms of biological role, specifically methylates the N7 position of guanine in position 535 of 16S rRNA. This is Ribosomal RNA small subunit methyltransferase G from Bacillus velezensis (strain DSM 23117 / BGSC 10A6 / LMG 26770 / FZB42) (Bacillus amyloliquefaciens subsp. plantarum).